The sequence spans 122 residues: MTKLSRKLQTQKRHRRLRRFLIGDATRPRLSVFRSNNHIYAQVIDDSAQTTICSASTVDKELREKSEKLPSDCNSSSIVGKLLAKRAIKKGIKQVIFDRGGNLYHGRVKALADAAREAGLEF.

The protein belongs to the universal ribosomal protein uL18 family. In terms of assembly, part of the 50S ribosomal subunit; part of the 5S rRNA/L5/L18/L25 subcomplex. Contacts the 5S and 23S rRNAs.

This is one of the proteins that bind and probably mediate the attachment of the 5S RNA into the large ribosomal subunit, where it forms part of the central protuberance. This chain is Large ribosomal subunit protein uL18, found in Prochlorococcus marinus (strain MIT 9301).